The sequence spans 532 residues: Glutamate--cysteine ligase (532 aa).

It belongs to the glutamate--cysteine ligase type 1 family. Type 1 subfamily.

It carries out the reaction L-cysteine + L-glutamate + ATP = gamma-L-glutamyl-L-cysteine + ADP + phosphate + H(+). It participates in sulfur metabolism; glutathione biosynthesis; glutathione from L-cysteine and L-glutamate: step 1/2. In Pseudomonas fluorescens (strain Pf0-1), this protein is Glutamate--cysteine ligase.